Consider the following 51-residue polypeptide: Large ribosomal subunit protein eL39 (51 aa).

Over residues 1–19 (MSHNMKGQKKRLAKAHKQN) the composition is skewed to basic residues. A disordered region spans residues 1 to 23 (MSHNMKGQKKRLAKAHKQNSRVP).

The protein belongs to the eukaryotic ribosomal protein eL39 family.

The sequence is that of Large ribosomal subunit protein eL39 from Methanosarcina mazei (strain ATCC BAA-159 / DSM 3647 / Goe1 / Go1 / JCM 11833 / OCM 88) (Methanosarcina frisia).